Reading from the N-terminus, the 172-residue chain is Adenine phosphoribosyltransferase (172 aa).

This sequence belongs to the purine/pyrimidine phosphoribosyltransferase family. Homodimer.

It is found in the cytoplasm. The enzyme catalyses AMP + diphosphate = 5-phospho-alpha-D-ribose 1-diphosphate + adenine. Its pathway is purine metabolism; AMP biosynthesis via salvage pathway; AMP from adenine: step 1/1. Catalyzes a salvage reaction resulting in the formation of AMP, that is energically less costly than de novo synthesis. In Crocosphaera subtropica (strain ATCC 51142 / BH68) (Cyanothece sp. (strain ATCC 51142)), this protein is Adenine phosphoribosyltransferase.